The sequence spans 164 residues: Phosphopantetheine adenylyltransferase (164 aa).

Ser9 lines the substrate pocket. Residues 9-10 (SF) and His17 contribute to the ATP site. Lys41, Leu73, and Lys87 together coordinate substrate. ATP contacts are provided by residues 88-90 (GLR), Glu98, and 123-129 (YSYISSS).

The protein belongs to the bacterial CoaD family. In terms of assembly, homohexamer. The cofactor is Mg(2+).

It localises to the cytoplasm. The catalysed reaction is (R)-4'-phosphopantetheine + ATP + H(+) = 3'-dephospho-CoA + diphosphate. It functions in the pathway cofactor biosynthesis; coenzyme A biosynthesis; CoA from (R)-pantothenate: step 4/5. Its function is as follows. Reversibly transfers an adenylyl group from ATP to 4'-phosphopantetheine, yielding dephospho-CoA (dPCoA) and pyrophosphate. In Clostridium perfringens (strain SM101 / Type A), this protein is Phosphopantetheine adenylyltransferase.